The following is a 304-amino-acid chain: Putative ankyrin repeat protein R602 (304 aa).

6 ANK repeats span residues 82–117 (LIRYILYIAYQNHHQDCSVYYEMIKYLIDYGLDITF), 118–146 (NDNFAIKLASLCHENILKLVIDNGGDVHA), 147–176 (DNEFPICLAANHGRLSCVKLLVDCGVDPFC), 178–206 (DNIVIKLASIDYYDNVVEYMVSIGADINA), 207–236 (GNNYVLRYAIKNLDKKMIELAINAGASIND), and 238–266 (SPNDITHIIKYQSPTIMNILVEYGLDIST).

The sequence is that of Putative ankyrin repeat protein R602 from Acanthamoeba polyphaga (Amoeba).